The following is a 337-amino-acid chain: G-protein coupled receptor 26 (337 aa).

The Extracellular portion of the chain corresponds to 1 to 10 (MNSWDAGLAG). A helical membrane pass occupies residues 11–31 (LLVGTIGVSLLSNGLVLLCLL). At 32 to 47 (HSADIRRQAPALFTLN) the chain is on the cytoplasmic side. The helical transmembrane segment at 48-68 (LTCGNLLCTVVNMPLTLAGVV) threads the bilayer. At 69–81 (AQRQPAGDRLCRL) the chain is on the extracellular side. The cysteines at positions 79 and 156 are disulfide-linked. The chain crosses the membrane as a helical span at residues 82–102 (AAFLDTFLAANSMLSMAALSI). The Cytoplasmic segment spans residues 103–123 (DRWVAVVFPLSYRAKMRLRDA). Residues 124–144 (AFMVAYTWLHALTFPATALAL) traverse the membrane as a helical segment. Residues 145–168 (SWLGFHQLYASCTLCSRRPDERLR) are Extracellular-facing. Residues 169–189 (FAVFTSAFHALSFLLSFIVLC) form a helical membrane-spanning segment. Residues 190 to 245 (FTYLKVLKVARFHCKRIDVITMQTLVLLVDIHPSVRERCLEEQKRRRQRATKKIST) are Cytoplasmic-facing. Residues 246–266 (FIGTFLVCFAPYVITRLVELF) traverse the membrane as a helical segment. Over 267 to 276 (STAPIDSHWG) the chain is Extracellular. A helical transmembrane segment spans residues 277–297 (VLSKCLAYSKAASDPFVYSLL). The Cytoplasmic segment spans residues 298–337 (RHQYRRSCKELLNRIFNRRSIHSVGLTGDSHSQNILPVSE).

It belongs to the G-protein coupled receptor 1 family. Detected in extracts of several brain regions including striatum, pons, cerebellum and cortex. Not detected in numerous peripheral tissue extracts, except in testis. In the brain, detected in cortical structures including the anterior cingulate area, posterior cingulate and the frontoparietal, somatosensory and piriform cortices. Prominent also in the olfactory tubercle, the islands of Calleja, ventromedial and posterior nuclei of the hypothalamus, the medial septal nucleus, nucleus of the diagonal band and the ventral tegmental area. Localized also to hippocampal structures, with signals strongest over the CA2 and CA3 regions of Ammon's horn and less so over the dentate gyrus. Expressed in the caudate putamen only in its most caudal portion, with a decreasing gradient of signal from the dorsal to ventral aspect. Strong expression associated with a single pontine structure, the inferior olivary nucleus.

The protein localises to the cell membrane. Its function is as follows. Orphan receptor. Displays a significant level of constitutive activity. Its effect is mediated by G(s)-alpha protein that stimulate adenylate cyclase, resulting in an elevation of intracellular cAMP. This is G-protein coupled receptor 26 (Gpr26) from Rattus norvegicus (Rat).